A 594-amino-acid chain; its full sequence is MSNELDYRPVMLLQNDINLKYSSPNDDEAWSKYLENPMTAATKAMMRANGDDDGVAALSLLYDYYRVPKEKRIITQGSTGRCDQVKRSCIEYDSDISTYDSTQLMRFLNDNNSSTHEYSETHKKNSYLSLDCLINPSKLPLSSGKLDNNAHDDFMATSCDVYEKNPLTTLFDPIHVPPPQQRWQPDSTFKEDTPEPLIFNDILRSQAESTCSEDYIPGEANRDFECTLESPKAIHIKSGESPMAYLNKGQFYPVNLRTAETRKCVHLTSNKVKSVVMVVFDNEKNPEEQLKRWKHWHSRQPTAKQRVIDVADYKENCNTVENIEEVAYNALSFVWNINEEAKIFIGINCLSTDFSSQKGVKGVPLNLQIDTYDFETGVKRLIHRAVCQIKIFCDKGAERKMRDEERKQFRRKGKSADQNNKDIKASVLPGYRGSDFTYLRPVTDMETHPVLFIPNIHYSNLQRCGVVLQSAADNSDRLSLKRSSQSFPESFEAPPSKQQTNEDPQRVLLYVRRETEEVFDALMLKTPDLKGLRNAISEKYELPEERICRVYKKCKRGILVNMDNNIIQHYSNHVAFLLDLTDVDGKIQVTLKEL.

Transcription activation stretches follow at residues 25–75 (NDDE…RIIT) and 28–91 (EAWS…SCIE). Positions 220 to 453 (ANRDFECTLE…DMETHPVLFI (234 aa)) constitute a Grh/CP2 DB domain. Positions 483-503 (SSQSFPESFEAPPSKQQTNED) are disordered.

The protein belongs to the grh/CP2 family. Grainyhead subfamily.

It localises to the nucleus. Transcription factor playing important roles in primary neurulation and in the differentiation of stratified epithelia of both ectodermal and endodermal origin. Binds directly to the consensus DNA sequence 5'-AACCGGTT-3' acting as an activator and repressor on distinct target genes. The chain is Grainyhead-like protein 3 homolog (grhl3) from Xenopus tropicalis (Western clawed frog).